The primary structure comprises 255 residues: Wtf element wtf15 (255 aa).

A disordered region spans residues 19–78 (KAGHEIDLEGSPPSEHNSEEKSTLPSNSDILTSANPVSQASETPDHSIESNTGSTQSPTS). Polar residues-rich tracts occupy residues 41–60 (TLPS…QASE) and 67–78 (ESNTGSTQSPTS). The next 3 helical transmembrane spans lie at 85–105 (FSFC…CVLP), 112–132 (FLIA…SGSI), and 162–182 (FLKT…LVLL).

The protein belongs to the WTF family.

It is found in the spore membrane. May act in meiotic drive. This is Wtf element wtf15 from Schizosaccharomyces kambucha (Fission yeast).